The chain runs to 707 residues: Transcription termination factor Rho (707 aa).

Disordered regions lie at residues 1–38 (MSDTTDLMGARVEETAAAPATDASAPATGAGSRRRRGT) and 76–321 (QAAG…DEIQ). Composition is skewed to low complexity over residues 16-31 (AAAPATDASAPATGAG) and 76-93 (QAAGGAPAKAAPAAADTA). A compositionally biased stretch (basic and acidic residues) spans 107-132 (RTGDEAPAEKAEKAGKADKKADKAAA). Low complexity predominate over residues 153–163 (ASAEQAAPADD). Residues 176 to 188 (DAGSPSATDTTVA) show a composition bias toward polar residues. Over residues 203–213 (QQSQGHQQGQG) the composition is skewed to low complexity. The span at 215–265 (ARSDAEGGDGRRRDRRDRGDRDRGDRGDRGDRGDRGDRGERGRDRRNKGDD) shows a compositional bias: basic and acidic residues. Over residues 301 to 315 (RRGRRGRYRDRRGRR) the composition is skewed to basic residues. The Rho RNA-BD domain occupies 331–406 (LIPVAGILDI…VRLDSVNGMA (76 aa)). ATP is bound by residues 449–454 (GKGQRG), 461–466 (KTGKTM), and Arg492.

Belongs to the Rho family. As to quaternary structure, homohexamer. The homohexamer assembles into an open ring structure.

In terms of biological role, facilitates transcription termination by a mechanism that involves Rho binding to the nascent RNA, activation of Rho's RNA-dependent ATPase activity, and release of the mRNA from the DNA template. In Streptomyces lividans, this protein is Transcription termination factor Rho.